Consider the following 132-residue polypeptide: Interleukin-5 (132 aa).

An N-terminal signal peptide occupies residues 1–19; it reads MRMLLCLNVLTLSCVWAIA. N45, N74, and N88 each carry an N-linked (GlcNAc...) asparagine glycan.

Belongs to the IL-5 family. Homodimer; disulfide-linked. Interacts with IL5RA. Interacts with CSF2RB.

It localises to the secreted. In terms of biological role, homodimeric cytokine expressed predominantly by T-lymphocytes and NK cells that plays an important role in the survival, differentiation, and chemotaxis of eosinophils. Acts also on activated and resting B-cells to induce immunoglobulin production, growth, and differentiation. Mechanistically, exerts its biological effects through a receptor composed of IL5RA subunit and the cytokine receptor common subunit beta/CSF2RB. Binding to the receptor leads to activation of various kinases including LYN, SYK and JAK2 and thereby propagates signals through the RAS-MAPK and JAK-STAT5 pathways respectively. This Rattus norvegicus (Rat) protein is Interleukin-5 (Il5).